We begin with the raw amino-acid sequence, 60 residues long: UPF0434 protein YcaR (60 aa).

Belongs to the UPF0434 family.

In Escherichia fergusonii (strain ATCC 35469 / DSM 13698 / CCUG 18766 / IAM 14443 / JCM 21226 / LMG 7866 / NBRC 102419 / NCTC 12128 / CDC 0568-73), this protein is UPF0434 protein YcaR.